The sequence spans 539 residues: Chaperone Ric-8A (539 aa).

Positions 507–539 (MGITPSGNLAPMENAIRDMADERSSSDSDLGLD) are disordered. Residues 521–532 (AIRDMADERSSS) show a composition bias toward basic and acidic residues.

Belongs to the synembryn family.

The protein resides in the cytoplasm. It is found in the cell cortex. Chaperone that specifically binds and folds nascent G alpha proteins prior to G protein heterotrimer formation, promoting their stability and activity: folds GNAI1, GNAO1, GNA13 and GNAQ. Does not fold G(s) G-alpha proteins GNAS nor GNAL. Also acts as a guanine nucleotide exchange factor (GEF) for G alpha proteins by stimulating exchange of bound GDP for free GTP. The protein is Chaperone Ric-8A (RIC8A) of Gallus gallus (Chicken).